A 708-amino-acid chain; its full sequence is Glutamate--tRNA ligase, cytoplasmic (708 aa).

Interaction with ARC1 stretches follow at residues 106–115 and 141–157; these read NLRTFILGGL and KVDVNVSRWYTLLEMDP. 205–207 is a binding site for L-glutamate; that stretch reads RFP. The 'HIGH' region signature appears at 210 to 219; that stretch reads PSGYLHIGHA. His215 contacts ATP. Position 241 (Asp241) interacts with L-glutamate. Thr300 carries the phosphothreonine modification. L-glutamate is bound by residues 382–386 and Arg400; that span reads YDFCV. Residues Glu403 and 437 to 441 each bind ATP; that span reads LLSKR. Positions 437–441 match the 'KMSKS' region motif; it reads LLSKR.

Belongs to the class-I aminoacyl-tRNA synthetase family. Glutamate--tRNA ligase type 2 subfamily. In terms of assembly, component of a yeast aminoacyl-tRNA synthase (aaRS) complex formed by methionyl-tRNA synthase MES1, glutamyl-tRNA synthase GUS1 and the tRNA aminoacylation cofactor ARC1 in a stoichiometric complex. Interacts (via N-ter) with ARC1 (via N-ter). Can also form a stable binary complex with ARC1 that is functional in terms of aminoacylation. ARC1 increases the affinity for cognate tRNAs due to the presence of a tRNA binding domain in the middle and C-terminal part of ARC1.

The protein localises to the cytoplasm. Its subcellular location is the mitochondrion. The enzyme catalyses tRNA(Glu) + L-glutamate + ATP = L-glutamyl-tRNA(Glu) + AMP + diphosphate. Catalyzes the attachment of glutamate to tRNA(Glu) in a two-step reaction: glutamate is first activated by ATP to form Glu-AMP and then transferred to the acceptor end of tRNA(Glu). In mitochondria, constitutes the nondiscriminating glutamyl-tRNA synthase that generates the mitochondrial mischarged glutamyl-tRNA(Gln) substrate for the tRNA-dependent amidotransferase (AdT), which generates mitochondrial glutaminyl-tRNA(Gln) by transamidation of glutamyl-tRNA(Gln). The protein is Glutamate--tRNA ligase, cytoplasmic (GUS1) of Saccharomyces cerevisiae (strain ATCC 204508 / S288c) (Baker's yeast).